A 637-amino-acid polypeptide reads, in one-letter code: DNA mismatch repair protein MutL (637 aa).

Disordered regions lie at residues 352 to 384 (DDFTSAKPSEDRGSTSSNEENEQRSSIDKNVLF) and 405 to 430 (ASVEPALEKEPPAAELTAGAKGAMEQ).

The protein belongs to the DNA mismatch repair MutL/HexB family.

In terms of biological role, this protein is involved in the repair of mismatches in DNA. It is required for dam-dependent methyl-directed DNA mismatch repair. May act as a 'molecular matchmaker', a protein that promotes the formation of a stable complex between two or more DNA-binding proteins in an ATP-dependent manner without itself being part of a final effector complex. This is DNA mismatch repair protein MutL from Halalkalibacterium halodurans (strain ATCC BAA-125 / DSM 18197 / FERM 7344 / JCM 9153 / C-125) (Bacillus halodurans).